Reading from the N-terminus, the 396-residue chain is MAAAVDTFLFTSESVNEGHPDKLCDQISDAVLDACLAQDPESKVACETCTKTNLVMVFGEITTKANVDYEKIVRQTCRDIGFVSADVGLDADNCKVLVNIEQQSPDIAQGVHGHLTRRPEEIGAGDQGHMFGYATDETPELMPLSHVLATKLGARLTEVRKNGTCPWLRPDGKTQVTVEYYNENGAMVPIRVHTVLISTQHDETVTNDEIAADLKEHVIKPVIPEKYLDEKTIFHLNPSGRFVIGGPHGDAGLTGRKIIIDTYGGWGAHGGGAFSGKDPTKVDRSGAYIARQAAKSIVAAGLARRCIVQISYAIGVPEPLSVFVDTYGTGKIPDKEILKIVKESFDFRPGMIAINLDLLKGGSRYLKTAAYGHFGRDDADFTWETVKPLKWEKPQA.

Glutamate 13 contributes to the Mg(2+) binding site. Histidine 19 is an ATP binding site. Residue glutamate 47 participates in K(+) binding. Residues glutamate 60 and glutamine 103 each coordinate L-methionine. ATP-binding positions include 171 to 173 (DGK), 239 to 242 (SGRF), aspartate 250, 256 to 257 (RK), alanine 273, lysine 277, and lysine 281. Aspartate 250 is a binding site for L-methionine. L-methionine is bound at residue lysine 281.

The protein belongs to the AdoMet synthase family. Homotetramer. Mn(2+) is required as a cofactor. It depends on Mg(2+) as a cofactor. Co(2+) serves as cofactor. Requires K(+) as cofactor. Expressed in roots, stems and leaves (at protein level).

It localises to the cytoplasm. It carries out the reaction L-methionine + ATP + H2O = S-adenosyl-L-methionine + phosphate + diphosphate. The protein operates within amino-acid biosynthesis; S-adenosyl-L-methionine biosynthesis; S-adenosyl-L-methionine from L-methionine: step 1/1. Its function is as follows. Catalyzes the formation of S-adenosylmethionine from methionine and ATP. The reaction comprises two steps that are both catalyzed by the same enzyme: formation of S-adenosylmethionine (AdoMet) and triphosphate, and subsequent hydrolysis of the triphosphate. May be involved in the synthesis of betain in response to abiotic stress such as high salinity. The protein is S-adenosylmethionine synthase 3 (SAMS3) of Atriplex nummularia (Old man saltbush).